Reading from the N-terminus, the 734-residue chain is Photosystem I P700 chlorophyll a apoprotein A2 (734 aa).

A run of 8 helical transmembrane segments spans residues I46 to A69, L135 to Q158, L175 to I199, M273 to Y291, L330 to Y353, A369 to V395, A417 to H439, and F517 to V535. [4Fe-4S] cluster-binding residues include C559 and C568. 2 consecutive transmembrane segments (helical) span residues A575 to W596 and L643 to I665. 3 residues coordinate chlorophyll a: H654, M662, and Y670. W671 serves as a coordination point for phylloquinone. A helical transmembrane segment spans residues L707–A727.

This sequence belongs to the PsaA/PsaB family. In terms of assembly, the PsaA/B heterodimer binds the P700 chlorophyll special pair and subsequent electron acceptors. PSI consists of a core antenna complex that captures photons, and an electron transfer chain that converts photonic excitation into a charge separation. The eukaryotic PSI reaction center is composed of at least 11 subunits. P700 is a chlorophyll a/chlorophyll a' dimer, A0 is one or more chlorophyll a, A1 is one or both phylloquinones and FX is a shared 4Fe-4S iron-sulfur center. serves as cofactor.

The protein resides in the plastid. It is found in the chloroplast thylakoid membrane. It carries out the reaction reduced [plastocyanin] + hnu + oxidized [2Fe-2S]-[ferredoxin] = oxidized [plastocyanin] + reduced [2Fe-2S]-[ferredoxin]. PsaA and PsaB bind P700, the primary electron donor of photosystem I (PSI), as well as the electron acceptors A0, A1 and FX. PSI is a plastocyanin/cytochrome c6-ferredoxin oxidoreductase, converting photonic excitation into a charge separation, which transfers an electron from the donor P700 chlorophyll pair to the spectroscopically characterized acceptors A0, A1, FX, FA and FB in turn. Oxidized P700 is reduced on the lumenal side of the thylakoid membrane by plastocyanin or cytochrome c6. In Pyropia yezoensis (Susabi-nori), this protein is Photosystem I P700 chlorophyll a apoprotein A2.